Reading from the N-terminus, the 217-residue chain is MSSKPSNMLDEVTLYTHYGLSVAKKLGANMVDAFRSAFSVNDDIRQVYYRDKGISHAKAGRYSEAVVMLEQVYDADAFDVEVALHLGIAYVKTGAVDRGTELLERSIADAPDNIKVATVLGLTYVQVQKYDLAVPLLVKVAEANPVNFNVRFRLGVALDNLGRFDEAIDSFKIALGLRPNEGKVHRAIAYSYEQMGSHEEALPHFKKANELDERSAV.

6 TPR repeats span residues 12 to 44 (VTLY…NDDI), 46 to 79 (QVYY…DAFD), 80 to 113 (VEVA…APDN), 114 to 147 (IKVA…NPVN), 148 to 181 (FNVR…RPNE), and 182 to 215 (GKVH…DERS). The N-terminal domain stretch occupies residues 41–112 (NDDIRQVYYR…LERSIADAPD (72 aa)). The tract at residues 113–217 (NIKVATVLGL…ANELDERSAV (105 aa)) is C-terminal domain.

This sequence belongs to the magnetosome MamA family. As to quaternary structure, forms round, 20 nm diameter complexes with a central cavity. Probably binds MamC. Interacts with full-length Mms6.

It localises to the magnetosome membrane. Probably forms a large homooligomer on which other magnetosome subunits assemble. Required for formation of functional magnetosomes from pre-existing vesicles. The polypeptide is Magnetosome protein MamA (Magnetospirillum gryphiswaldense (strain DSM 6361 / JCM 21280 / NBRC 15271 / MSR-1)).